The chain runs to 764 residues: Plasma membrane fusion protein prm-1 (764 aa).

Over 1 to 61 the chain is Extracellular; sequence MVYNEKNGGG…YLGLRARLSQ (61 aa). The helical transmembrane segment at 62 to 82 threads the bilayer; it reads LWFNRWTILLILVLIRVIILT. The Cytoplasmic portion of the chain corresponds to 83–149; it reads ANLKENLGDA…LKMILTGVQA (67 aa). The chain crosses the membrane as a helical span at residues 150–170; sequence IIMFVINMYIGTFACLVAAFI. The Extracellular segment spans residues 171-334; that stretch reads HGGLHVATAV…SLITLVYKAK (164 aa). Residues Asn-271 and Asn-315 are each glycosylated (N-linked (GlcNAc...) asparagine). A helical transmembrane segment spans residues 335 to 355; sequence IAFLVVIIILALLAIFVMGYI. The Cytoplasmic segment spans residues 356-424; sequence EYRGFKRERE…AFAYATSLPA (69 aa). The helical transmembrane segment at 425–445 threads the bilayer; sequence LFVLSLAVAGMLSCLFQWVLL. The Extracellular portion of the chain corresponds to 446–624; that stretch reads RQIEKKAPEL…NGVIQEALIT (179 aa). N-linked (GlcNAc...) asparagine glycans are attached at residues Asn-479, Asn-508, and Asn-527. The chain crosses the membrane as a helical span at residues 625-645; it reads LGLFLTYVIVVLIGVMGALIG. The Cytoplasmic portion of the chain corresponds to 646-764; the sequence is WATPGKTRGE…EKVPGYFTPI (119 aa). Disordered regions lie at residues 653–701 and 735–754; these read RGEG…GGGG and HQRT…PHGD.

This sequence belongs to the PRM1 family.

Its subcellular location is the cell membrane. Functionally, involved in cell fusion during mating by stabilizing the plasma membrane fusion event. The sequence is that of Plasma membrane fusion protein prm-1 (prm-1) from Neurospora crassa (strain ATCC 24698 / 74-OR23-1A / CBS 708.71 / DSM 1257 / FGSC 987).